The primary structure comprises 273 residues: 4-diphosphocytidyl-2-C-methyl-D-erythritol kinase (273 aa).

Lys9 is an active-site residue. 90–100 serves as a coordination point for ATP; the sequence is PVAAGLGGGSA. Asp129 is an active-site residue.

This sequence belongs to the GHMP kinase family. IspE subfamily.

It catalyses the reaction 4-CDP-2-C-methyl-D-erythritol + ATP = 4-CDP-2-C-methyl-D-erythritol 2-phosphate + ADP + H(+). The protein operates within isoprenoid biosynthesis; isopentenyl diphosphate biosynthesis via DXP pathway; isopentenyl diphosphate from 1-deoxy-D-xylulose 5-phosphate: step 3/6. In terms of biological role, catalyzes the phosphorylation of the position 2 hydroxy group of 4-diphosphocytidyl-2C-methyl-D-erythritol. This Erythrobacter litoralis (strain HTCC2594) protein is 4-diphosphocytidyl-2-C-methyl-D-erythritol kinase.